We begin with the raw amino-acid sequence, 118 residues long: C-X-C motif chemokine 17 (118 aa).

Residues 1–22 form the signal peptide; it reads MKVLISSLLLLLPLMLMSVVSS. 2 disulfides stabilise this stretch: Cys74-Cys102 and Cys76-Cys109.

Belongs to the intercrine alpha (chemokine CxC) family.

The protein localises to the secreted. Its function is as follows. Chemokine that acts as a chemoattractant for monocytes, macrophages and dendritic cells. Plays a role in angiogenesis and possibly in the development of tumors. Acts as an anti-inflammatory in the stomach. May play a role in the innate defense against infections. Activates the C-X-C chemokine receptor GPR35 to induce a rapid and transient rise in the level of intracellular calcium ions. This Bos taurus (Bovine) protein is C-X-C motif chemokine 17 (CXCL17).